We begin with the raw amino-acid sequence, 365 residues long: Mannose-1-phosphate guanylyltransferase catalytic subunit beta (365 aa).

Positions 2 to 221 (KALILVGGYG…PGFWMDVGQP (220 aa)) are substrate-binding domain. D109 is a GDP-alpha-D-mannose binding site. Residue D109 coordinates Mg(2+). K161 is a catalytic residue. A GDP-alpha-D-mannose-binding site is contributed by D217. Mg(2+) is bound at residue D217. Positions 244-365 (ETGSNIHPTA…VNVPSKDIIM (122 aa)) are hexapeptide repeat domain.

This sequence belongs to the transferase hexapeptide repeat family. In terms of assembly, component of the GMPPA-GMPPB mannose-1-phosphate guanylyltransferase complex composed of 4 GMPPA subunits and 8 tag-335/GMPPB subunits; the complex is organized into three layers, a central layer made up of 2 GMPPA dimers sandwiched between two layers each made up of 2 tag-335/GMPPB dimers. Catalytic activity of tag-335/GMPPB is reduced when part of the complex and binding of GDP-alpha-D-Mannose by GMPPA induces allosteric feedback inhibition of tag-335/GMPPB. It depends on Mg(2+) as a cofactor.

The catalysed reaction is alpha-D-mannose 1-phosphate + GTP + H(+) = GDP-alpha-D-mannose + diphosphate. Its pathway is nucleotide-sugar biosynthesis; GDP-alpha-D-mannose biosynthesis; GDP-alpha-D-mannose from alpha-D-mannose 1-phosphate (GTP route): step 1/1. With respect to regulation, enzyme activity is reduced by incorporation into the GMPPA-GMPPB mannose-1-phosphate guanylyltransferase complex. Allosterically inhibited, when part of the GMPPA-GMPPB complex, by GDP-alpha-D-mannose binding to GMPPA. Its function is as follows. Catalytic subunit of the GMPPA-GMPPB mannose-1-phosphate guanylyltransferase complex. Catalyzes the formation of GDP-mannose, an essential precursor of glycan moieties of glycoproteins and glycolipids. Can catalyze the reverse reaction in vitro. Together with GMPPA regulates GDP-alpha-D-mannose levels. This Caenorhabditis elegans protein is Mannose-1-phosphate guanylyltransferase catalytic subunit beta (tag-335).